Reading from the N-terminus, the 83-residue chain is uncharacterized protein (83 aa).

Residues 58–80 form a helical membrane-spanning segment; it reads YWGYGAAYGISLGLIAGVALAGL.

The protein localises to the membrane. This is an uncharacterized protein from Bacillus subtilis (strain 168).